Reading from the N-terminus, the 475-residue chain is 3-isopropylmalate dehydratase large subunit 1 (475 aa).

Residues Cys-353, Cys-413, and Cys-416 each contribute to the [4Fe-4S] cluster site.

The protein belongs to the aconitase/IPM isomerase family. LeuC type 1 subfamily. As to quaternary structure, heterodimer of LeuC and LeuD. The cofactor is [4Fe-4S] cluster.

It catalyses the reaction (2R,3S)-3-isopropylmalate = (2S)-2-isopropylmalate. It participates in amino-acid biosynthesis; L-leucine biosynthesis; L-leucine from 3-methyl-2-oxobutanoate: step 2/4. Its function is as follows. Catalyzes the isomerization between 2-isopropylmalate and 3-isopropylmalate, via the formation of 2-isopropylmaleate. This is 3-isopropylmalate dehydratase large subunit 1 from Mannheimia succiniciproducens (strain KCTC 0769BP / MBEL55E).